A 141-amino-acid polypeptide reads, in one-letter code: VLSPADKTNVKAAWEKVGGHGAAYGAEALERMFLSFPTTKTYFPHFDLSHGSAQVQGHGKKVADALANAAGHLDDLPSALSALSDLHAHKLRVDPVNFKLLSHCLLVTLAAHHPAEFTPAVHASLDKFLATVSTVLTSKYR.

A Globin domain is found at 1–141; that stretch reads VLSPADKTNV…VSTVLTSKYR (141 aa). Phosphoserine is present on serine 3. Residue lysine 7 is modified to N6-succinyllysine. Threonine 8 is modified (phosphothreonine). Residue lysine 11 is modified to N6-succinyllysine. The residue at position 16 (lysine 16) is an N6-acetyllysine; alternate. The residue at position 16 (lysine 16) is an N6-succinyllysine; alternate. At tyrosine 24 the chain carries Phosphotyrosine. A Phosphoserine modification is found at serine 35. Lysine 40 is subject to N6-succinyllysine. Serine 49 is modified (phosphoserine). Histidine 58 lines the O2 pocket. Heme b is bound at residue histidine 87. A Phosphoserine modification is found at serine 102. The residue at position 108 (threonine 108) is a Phosphothreonine. Serine 124 bears the Phosphoserine mark. Phosphothreonine is present on residues threonine 134 and threonine 137. Residue serine 138 is modified to Phosphoserine.

It belongs to the globin family. Heterotetramer of two alpha chains and two beta chains. As to expression, red blood cells.

Its function is as follows. Involved in oxygen transport from the lung to the various peripheral tissues. The polypeptide is Hemoglobin subunit alpha (Tamias merriami (Merriam's chipmunk)).